The primary structure comprises 425 residues: Polyribonucleotide 5'-hydroxyl-kinase Clp1 (425 aa).

ATP contacts are provided by residues E22, K62, and 124–129; that span reads DVGKST.

Belongs to the Clp1 family. Clp1 subfamily. Component of the tRNA splicing endonuclease complex. Component of pre-mRNA cleavage complex II (CF-II).

The protein localises to the nucleus. The enzyme catalyses a 5'-end dephospho-2'-deoxyribonucleoside-DNA + ATP = a 5'-end 5'-phospho-2'-deoxyribonucleoside-DNA + ADP + H(+). It catalyses the reaction a 5'-end dephospho-ribonucleoside-RNA + ATP = a 5'-end 5'-phospho-ribonucleoside-RNA + ADP + H(+). Its function is as follows. Polynucleotide kinase that can phosphorylate the 5'-hydroxyl groups of double-stranded RNA (dsRNA), single-stranded RNA (ssRNA), double stranded DNA (dsDNA) and double-stranded DNA:RNA hybrids. dsRNA is phosphorylated more efficiently than dsDNA, and the RNA component of a DNA:RNA hybrid is phosphorylated more efficiently than the DNA component. Plays a role in both tRNA splicing and mRNA 3'-end formation. Component of the tRNA splicing endonuclease complex: phosphorylates the 5'-terminus of the tRNA 3'-exon during tRNA splicing; this phosphorylation event is a prerequisite for the subsequent ligation of the two exon halves and the production of a mature tRNA. Its role in tRNA splicing and maturation is required for cerebellar development. Component of the pre-mRNA cleavage complex II (CF-II), which seems to be required for mRNA 3'-end formation. Also phosphorylates the 5'-terminus of exogenously introduced short interfering RNAs (siRNAs), which is a necessary prerequisite for their incorporation into the RNA-induced silencing complex (RISC). However, endogenous siRNAs and microRNAs (miRNAs) that are produced by the cleavage of dsRNA precursors by dicer1 already contain a 5'-phosphate group, so this protein may be dispensible for normal RNA-mediated gene silencing. In Gallus gallus (Chicken), this protein is Polyribonucleotide 5'-hydroxyl-kinase Clp1.